Here is a 798-residue protein sequence, read N- to C-terminus: Protocadherin beta-13 (798 aa).

Residues 1–28 form the signal peptide; it reads MEASGKLICRQRQVLFSFLLLGLSLAGA. The Extracellular portion of the chain corresponds to 29 to 690; that stretch reads AEPRSYSVVE…AQADSLTVYL (662 aa). Cadherin domains lie at 36–134, 139–243, 248–348, 353–451, and 456–561; these read VVEE…SPVF, MLVK…APEF, YRVQ…APEV, FTSP…APAF, and YTLF…SPFV. N-linked (GlcNAc...) asparagine glycans are attached at residues Asn-418 and Asn-436. N-linked (GlcNAc...) asparagine glycosylation is present at Asn-567. One can recognise a Cadherin 6 domain in the interval 568-671; it reads GSAPCTELVP…LVDGFSQPYL (104 aa). The chain crosses the membrane as a helical span at residues 691–711; that stretch reads VVALASVSSLFLFSVLLFVAV. At 712–798 the chain is on the cytoplasmic side; sequence RLCRRSRAAS…FPNNFGFNIQ (87 aa).

The protein localises to the cell membrane. Its function is as follows. Potential calcium-dependent cell-adhesion protein. May be involved in the establishment and maintenance of specific neuronal connections in the brain. This chain is Protocadherin beta-13 (PCDHB13), found in Pan troglodytes (Chimpanzee).